The sequence spans 123 residues: Small ribosomal subunit protein uS12 (123 aa).

At Asp-89 the chain carries 3-methylthioaspartic acid. The segment at 104–123 (TAGVQDRRQGRSKYGAKRPK) is disordered. The span at 113 to 123 (GRSKYGAKRPK) shows a compositional bias: basic residues.

This sequence belongs to the universal ribosomal protein uS12 family. In terms of assembly, part of the 30S ribosomal subunit. Contacts proteins S8 and S17. May interact with IF1 in the 30S initiation complex.

With S4 and S5 plays an important role in translational accuracy. In terms of biological role, interacts with and stabilizes bases of the 16S rRNA that are involved in tRNA selection in the A site and with the mRNA backbone. Located at the interface of the 30S and 50S subunits, it traverses the body of the 30S subunit contacting proteins on the other side and probably holding the rRNA structure together. The combined cluster of proteins S8, S12 and S17 appears to hold together the shoulder and platform of the 30S subunit. In Oleidesulfovibrio alaskensis (strain ATCC BAA-1058 / DSM 17464 / G20) (Desulfovibrio alaskensis), this protein is Small ribosomal subunit protein uS12.